Here is a 610-residue protein sequence, read N- to C-terminus: Scarecrow-like protein 11 (610 aa).

Disordered regions lie at residues Asn32–Val54, Gln98–Lys159, and Gln186–Asn220. 2 stretches are compositionally biased toward low complexity: residues Ser41–Pro52 and Gln99–Asp119. Composition is skewed to polar residues over residues Pro123 to Glu137 and Gly209 to Asn220. The region spanning Lys215–Lys598 is the GRAS domain. Residues Val222 to Pro283 are leucine repeat I (LRI). The tract at residues Tyr302–Gly367 is VHIID. A VHIID motif is present at residues Leu333–Asp337. Residues Glu383–Glu415 are leucine repeat II (LRII). The PFYRE stretch occupies residues Thr424–Ser520. Residues Ser523–Lys598 are SAW.

The protein belongs to the GRAS family. In terms of tissue distribution, highly expressed in roots and at lower levels in leaves and sepals. Expressed in siliques.

Its subcellular location is the nucleus. Its function is as follows. Probable transcription factor involved in plant development. The polypeptide is Scarecrow-like protein 11 (SCL11) (Arabidopsis thaliana (Mouse-ear cress)).